A 521-amino-acid polypeptide reads, in one-letter code: tRNA (adenine(58)-N(1))-methyltransferase non-catalytic subunit trm6 (521 aa).

Disordered stretches follow at residues 1 to 24 (METE…NNNN), 305 to 336 (IYDK…AKTI), and 452 to 521 (QKST…KIDE). Positions 12-24 (KSTTSNTNDNNNN) are enriched in low complexity. Over residues 308–334 (KQVKEKEKEKEKDENVKDEKESGEEAK) the composition is skewed to basic and acidic residues. 2 stretches are compositionally biased toward low complexity: residues 452-476 (QKST…TKTT) and 487-502 (DATT…AATT). Basic and acidic residues predominate over residues 510–521 (SESALKKRKIDE).

It belongs to the TRM6/GCD10 family. In terms of assembly, heterotetramer; composed of two copies of trmt6 and two copies of trmt61a.

Its subcellular location is the nucleus. Functionally, substrate-binding subunit of tRNA (adenine-N(1)-)-methyltransferase, which catalyzes the formation of N(1)-methyladenine at position 58 (m1A58) in initiator methionyl-tRNA. This is tRNA (adenine(58)-N(1))-methyltransferase non-catalytic subunit trm6 (trmt6) from Dictyostelium discoideum (Social amoeba).